Reading from the N-terminus, the 265-residue chain is Glutamate racemase (265 aa).

Residues 7–8 (DS) and 39–40 (YG) contribute to the substrate site. Catalysis depends on Cys-70, which acts as the Proton donor/acceptor. 71–72 (NT) contacts substrate. Cys-182 (proton donor/acceptor) is an active-site residue. A substrate-binding site is contributed by 183–184 (TH).

Belongs to the aspartate/glutamate racemases family.

It catalyses the reaction L-glutamate = D-glutamate. The protein operates within cell wall biogenesis; peptidoglycan biosynthesis. Its function is as follows. Provides the (R)-glutamate required for cell wall biosynthesis. The sequence is that of Glutamate racemase from Lachnospira eligens (strain ATCC 27750 / DSM 3376 / VPI C15-48 / C15-B4) (Eubacterium eligens).